The sequence spans 468 residues: 3-isopropylmalate dehydratase large subunit (468 aa).

3 residues coordinate [4Fe-4S] cluster: cysteine 347, cysteine 408, and cysteine 411.

The protein belongs to the aconitase/IPM isomerase family. LeuC type 1 subfamily. As to quaternary structure, heterodimer of LeuC and LeuD. The cofactor is [4Fe-4S] cluster.

The enzyme catalyses (2R,3S)-3-isopropylmalate = (2S)-2-isopropylmalate. Its pathway is amino-acid biosynthesis; L-leucine biosynthesis; L-leucine from 3-methyl-2-oxobutanoate: step 2/4. In terms of biological role, catalyzes the isomerization between 2-isopropylmalate and 3-isopropylmalate, via the formation of 2-isopropylmaleate. The sequence is that of 3-isopropylmalate dehydratase large subunit from Methylobacillus flagellatus (strain ATCC 51484 / DSM 6875 / VKM B-1610 / KT).